The following is a 283-amino-acid chain: MILYIATPYGFCSGVKKSISLAEKVLSNEGEVYTLGALVHNPKVIEELSKKGIKILEKNGFVEGKALIVRAHGLPQRDIEFYRTLGNRVYDATCPLVKKVQILAEYLNKNKYKVVIIGEKNHPEVIGILSYTDDQGIVVENEDDIKKIENYPKIGIVFQTTQSLDNALQKVNLIMEKGKEIRIFNTICPETIERQEKAKKLSEMVDLALVLGGKNSANTRRLYITLSKKIPTYHIENIEEIDKSWFKEDNKVGIITGTSTPNDFVEEVVELLKSLYPLEIHLV.

Cysteine 12 lines the [4Fe-4S] cluster pocket. (2E)-4-hydroxy-3-methylbut-2-enyl diphosphate-binding residues include histidine 40 and histidine 72. The dimethylallyl diphosphate site is built by histidine 40 and histidine 72. Histidine 40 and histidine 72 together coordinate isopentenyl diphosphate. Residue cysteine 94 coordinates [4Fe-4S] cluster. Residue histidine 122 coordinates (2E)-4-hydroxy-3-methylbut-2-enyl diphosphate. Histidine 122 provides a ligand contact to dimethylallyl diphosphate. An isopentenyl diphosphate-binding site is contributed by histidine 122. Glutamate 124 functions as the Proton donor in the catalytic mechanism. Residue threonine 160 participates in (2E)-4-hydroxy-3-methylbut-2-enyl diphosphate binding. Position 188 (cysteine 188) interacts with [4Fe-4S] cluster. Residues serine 216, asparagine 218, and serine 259 each coordinate (2E)-4-hydroxy-3-methylbut-2-enyl diphosphate. Dimethylallyl diphosphate is bound by residues serine 216, asparagine 218, and serine 259. Isopentenyl diphosphate is bound by residues serine 216, asparagine 218, and serine 259.

This sequence belongs to the IspH family. It depends on [4Fe-4S] cluster as a cofactor.

It carries out the reaction isopentenyl diphosphate + 2 oxidized [2Fe-2S]-[ferredoxin] + H2O = (2E)-4-hydroxy-3-methylbut-2-enyl diphosphate + 2 reduced [2Fe-2S]-[ferredoxin] + 2 H(+). The enzyme catalyses dimethylallyl diphosphate + 2 oxidized [2Fe-2S]-[ferredoxin] + H2O = (2E)-4-hydroxy-3-methylbut-2-enyl diphosphate + 2 reduced [2Fe-2S]-[ferredoxin] + 2 H(+). It functions in the pathway isoprenoid biosynthesis; dimethylallyl diphosphate biosynthesis; dimethylallyl diphosphate from (2E)-4-hydroxy-3-methylbutenyl diphosphate: step 1/1. The protein operates within isoprenoid biosynthesis; isopentenyl diphosphate biosynthesis via DXP pathway; isopentenyl diphosphate from 1-deoxy-D-xylulose 5-phosphate: step 6/6. Catalyzes the conversion of 1-hydroxy-2-methyl-2-(E)-butenyl 4-diphosphate (HMBPP) into a mixture of isopentenyl diphosphate (IPP) and dimethylallyl diphosphate (DMAPP). Acts in the terminal step of the DOXP/MEP pathway for isoprenoid precursor biosynthesis. The sequence is that of 4-hydroxy-3-methylbut-2-enyl diphosphate reductase from Dictyoglomus thermophilum (strain ATCC 35947 / DSM 3960 / H-6-12).